The sequence spans 644 residues: Exoribonuclease 2 (644 aa).

In terms of domain architecture, RNB spans 189 to 516; that stretch reads RQDLTALNFV…NHRLLKAVIK (328 aa). Residues 561–643 enclose the S1 motif domain; the sequence is NTRFAAEIID…ETRSIIARPA (83 aa).

It belongs to the RNR ribonuclease family. RNase II subfamily.

The protein resides in the cytoplasm. It catalyses the reaction Exonucleolytic cleavage in the 3'- to 5'-direction to yield nucleoside 5'-phosphates.. In terms of biological role, involved in mRNA degradation. Hydrolyzes single-stranded polyribonucleotides processively in the 3' to 5' direction. The protein is Exoribonuclease 2 of Salmonella paratyphi A (strain ATCC 9150 / SARB42).